The primary structure comprises 261 residues: Mite allergen Der p 3 (261 aa).

An N-terminal signal peptide occupies residues 1-18 (MIIYNILIVLLLAINTLA). Residues 19-29 (NPILPASPNAT) constitute a propeptide that is removed on maturation. Positions 30–260 (IVGGEKALAG…FIDWIESKRS (231 aa)) constitute a Peptidase S1 domain. A disulfide bridge links Cys-54 with Cys-70. Catalysis depends on charge relay system residues His-69 and Asp-114. Cystine bridges form between Cys-181–Cys-198 and Cys-210–Cys-236. Ser-214 (charge relay system) is an active-site residue.

This sequence belongs to the peptidase S1 family.

It localises to the secreted. This chain is Mite allergen Der p 3 (DERP3), found in Dermatophagoides pteronyssinus (European house dust mite).